Consider the following 348-residue polypeptide: Rhodopsin (348 aa).

Residues 1 to 33 lie on the Extracellular side of the membrane; that stretch reads TEGPYFYVPMVNTTGIVRSPYEYPQYYLVNPAA. Asparagine 12 carries an N-linked (GlcNAc...) asparagine glycan. The chain crosses the membrane as a helical span at residues 34–58; that stretch reads FAILGAYMFFLIIVGFPVNFMTLYV. Over 59–70 the chain is Cytoplasmic; sequence TLEHKKLRTPLN. Residues 71-93 traverse the membrane as a helical segment; sequence YILLNLAVADLFMVIGGFTTTMY. The Extracellular portion of the chain corresponds to 94–107; it reads TSMHGYFVLGRLGC. Residues cysteine 107 and cysteine 184 are joined by a disulfide bond. Residues 108–130 form a helical membrane-spanning segment; that stretch reads NLEGFFATLGGMISLWSLAVLAI. Residues 131-133 carry the 'Ionic lock' involved in activated form stabilization motif; that stretch reads ERW. The Cytoplasmic portion of the chain corresponds to 131 to 149; that stretch reads ERWVVVCKPISNFRFGENH. Residues 150 to 170 traverse the membrane as a helical segment; the sequence is AIMGVSLTWGMALACTVPPLV. Over 171–199 the chain is Extracellular; that stretch reads GWSRYIPEGMQCSCGIDYYTRAEGFNNET. Asparagine 197 carries an N-linked (GlcNAc...) asparagine glycan. Residues 200 to 221 form a helical membrane-spanning segment; that stretch reads FVLYMFCCHFTVPLTIIFFCYG. Residues 222-249 are Cytoplasmic-facing; it reads RLLCAVKEAAAAQQESETTQRAEREVTR. A helical transmembrane segment spans residues 250-271; that stretch reads MVVIMVIGFLVCWLPYASVAWF. Over 272-283 the chain is Extracellular; that stretch reads VFTHQGSEFGPL. Residues 284–305 traverse the membrane as a helical segment; sequence FMTIPAFFAKSSAIYNPMIYIC. An N6-(retinylidene)lysine modification is found at lysine 293. Over 306–348 the chain is Cytoplasmic; sequence MNKQFRHCMITTLFCGKNPFEGEEEGASSTKTEASSASSVSPA. The S-palmitoyl cysteine moiety is linked to residue cysteine 320. Residues 327 to 348 form a disordered region; it reads GEEEGASSTKTEASSASSVSPA. The span at 332-348 shows a compositional bias: low complexity; that stretch reads ASSTKTEASSASSVSPA.

The protein belongs to the G-protein coupled receptor 1 family. Opsin subfamily. In terms of processing, phosphorylated on some or all of the serine and threonine residues present in the C-terminal region. Contains one covalently linked retinal chromophore.

It is found in the membrane. The protein localises to the cell projection. Its subcellular location is the cilium. It localises to the photoreceptor outer segment. Photoreceptor required for image-forming vision at low light intensity. While most salt water fish species use retinal as chromophore, most freshwater fish use 3-dehydroretinal, or a mixture of retinal and 3-dehydroretinal. Light-induced isomerization of 11-cis to all-trans retinal triggers a conformational change that activates signaling via G-proteins. Subsequent receptor phosphorylation mediates displacement of the bound G-protein alpha subunit by arrestin and terminates signaling. The chain is Rhodopsin (rho) from Sargocentron xantherythrum (Hawaiian squirrelfish).